Here is a 177-residue protein sequence, read N- to C-terminus: Large ribosomal subunit protein uL6 (177 aa).

Belongs to the universal ribosomal protein uL6 family. In terms of assembly, part of the 50S ribosomal subunit.

Functionally, this protein binds to the 23S rRNA, and is important in its secondary structure. It is located near the subunit interface in the base of the L7/L12 stalk, and near the tRNA binding site of the peptidyltransferase center. The polypeptide is Large ribosomal subunit protein uL6 (Methylorubrum extorquens (strain CM4 / NCIMB 13688) (Methylobacterium extorquens)).